Reading from the N-terminus, the 1161-residue chain is Translation initiation factor IF-2 (1161 aa).

The interval 67 to 561 is disordered; the sequence is KSSFKAANEQ…RRAMELRAAK (495 aa). A compositionally biased stretch (basic and acidic residues) spans 83-105; it reads QNKDSNSRSKPLNKEKPSKESLN. Polar residues predominate over residues 139–154; the sequence is SRISNLQSQVLPNSHN. Basic and acidic residues-rich tracts occupy residues 164–180 and 211–220; these read NPNE…EKKS and KDIKANKKND. Composition is skewed to low complexity over residues 224-250 and 268-282; these read NQRP…PRIK and NSNR…PPSN. Polar residues-rich tracts occupy residues 295–311, 352–362, and 380–393; these read RQVT…QGVS, RQGAPNRQGSP, and LNRS…QNPS. The span at 412–432 shows a compositional bias: basic and acidic residues; sequence ASDKEKLNRSNFEKQKVEPPK. Positions 440-461 are enriched in polar residues; the sequence is SRLNASPTAKKTPHRSFTNNSK. Composition is skewed to basic and acidic residues over residues 464-478 and 543-561; these read GRSD…EALR and KETT…RAAK. In terms of domain architecture, tr-type G spans 653–830; the sequence is KRPPVITVMG…EVEDLQANPE (178 aa). Residues 662–669 are G1; sequence GHVDHGKT. 662 to 669 serves as a coordination point for GTP; the sequence is GHVDHGKT. Positions 687–691 are G2; sequence GITQH. The segment at 712 to 715 is G3; it reads DTPG. GTP is bound by residues 712-716 and 766-769; these read DTPGH and NKID. Positions 766–769 are G4; it reads NKID. The interval 802–804 is G5; the sequence is SAI.

It belongs to the TRAFAC class translation factor GTPase superfamily. Classic translation factor GTPase family. IF-2 subfamily.

It localises to the cytoplasm. One of the essential components for the initiation of protein synthesis. Protects formylmethionyl-tRNA from spontaneous hydrolysis and promotes its binding to the 30S ribosomal subunits. Also involved in the hydrolysis of GTP during the formation of the 70S ribosomal complex. The sequence is that of Translation initiation factor IF-2 from Prochlorococcus marinus (strain MIT 9515).